The following is a 119-amino-acid chain: Large ribosomal subunit protein uL24 (119 aa).

It belongs to the universal ribosomal protein uL24 family. In terms of assembly, part of the 50S ribosomal subunit.

Its function is as follows. One of two assembly initiator proteins, it binds directly to the 5'-end of the 23S rRNA, where it nucleates assembly of the 50S subunit. One of the proteins that surrounds the polypeptide exit tunnel on the outside of the subunit. This chain is Large ribosomal subunit protein uL24, found in Clavibacter michiganensis subsp. michiganensis (strain NCPPB 382).